The following is a 373-amino-acid chain: Mannitol-1-phosphate 5-dehydrogenase (373 aa).

3-14 is an NAD(+) binding site; the sequence is ALHFGAGNIGRG.

Belongs to the mannitol dehydrogenase family.

The enzyme catalyses D-mannitol 1-phosphate + NAD(+) = beta-D-fructose 6-phosphate + NADH + H(+). The polypeptide is Mannitol-1-phosphate 5-dehydrogenase (Bacillus velezensis (strain DSM 23117 / BGSC 10A6 / LMG 26770 / FZB42) (Bacillus amyloliquefaciens subsp. plantarum)).